Here is a 379-residue protein sequence, read N- to C-terminus: Carbamoyl phosphate synthase small chain (379 aa).

Residues 1 to 188 (MSTPAILALA…ELGKGFTQPE (188 aa)) form a CPSase region. L-glutamine is bound by residues Ser47, Gly240, and Gly242. Positions 192 to 379 (HVVAYDYGVK…FIELIEAAKK (188 aa)) constitute a Glutamine amidotransferase type-1 domain. The Nucleophile role is filled by Cys269. Leu270, Gln273, Asn311, Gly313, and Phe314 together coordinate L-glutamine. Active-site residues include His353 and Glu355.

Belongs to the CarA family. As to quaternary structure, composed of two chains; the small (or glutamine) chain promotes the hydrolysis of glutamine to ammonia, which is used by the large (or ammonia) chain to synthesize carbamoyl phosphate. Tetramer of heterodimers (alpha,beta)4.

It catalyses the reaction hydrogencarbonate + L-glutamine + 2 ATP + H2O = carbamoyl phosphate + L-glutamate + 2 ADP + phosphate + 2 H(+). The enzyme catalyses L-glutamine + H2O = L-glutamate + NH4(+). It functions in the pathway amino-acid biosynthesis; L-arginine biosynthesis; carbamoyl phosphate from bicarbonate: step 1/1. The protein operates within pyrimidine metabolism; UMP biosynthesis via de novo pathway; (S)-dihydroorotate from bicarbonate: step 1/3. Its function is as follows. Small subunit of the glutamine-dependent carbamoyl phosphate synthetase (CPSase). CPSase catalyzes the formation of carbamoyl phosphate from the ammonia moiety of glutamine, carbonate, and phosphate donated by ATP, constituting the first step of 2 biosynthetic pathways, one leading to arginine and/or urea and the other to pyrimidine nucleotides. The small subunit (glutamine amidotransferase) binds and cleaves glutamine to supply the large subunit with the substrate ammonia. The chain is Carbamoyl phosphate synthase small chain from Acinetobacter baylyi (strain ATCC 33305 / BD413 / ADP1).